Reading from the N-terminus, the 33-residue chain is Mu/delta-theraphotoxin-Pm2a (33 aa).

Cystine bridges form between Cys-2–Cys-16, Cys-9–Cys-21, and Cys-15–Cys-27. Phe-33 carries the post-translational modification Phenylalanine amide.

In terms of tissue distribution, expressed by the venom gland.

The protein localises to the secreted. In terms of biological role, gating-modifier toxin with very weak activity on Nav1.7/SCN9A and Nav1.8/SCN10A. Shows 22% peak current inhibition (at 10 uM) on Nav1.8/SCN10A sodium channels. Show peak current inhibition and delays fast inactivation on Nav1.7/SCN9A (EC(50)&gt;10 uM). The sequence is that of Mu/delta-theraphotoxin-Pm2a from Poecilotheria metallica (Metallic blue ornamental tree spider).